The chain runs to 142 residues: Nucleoside diphosphate kinase (142 aa).

Residues lysine 11, phenylalanine 59, arginine 87, threonine 93, arginine 104, and asparagine 114 each contribute to the ATP site. The active-site Pros-phosphohistidine intermediate is the histidine 117.

Belongs to the NDK family. As to quaternary structure, homotetramer. Requires Mg(2+) as cofactor.

Its subcellular location is the cytoplasm. The catalysed reaction is a 2'-deoxyribonucleoside 5'-diphosphate + ATP = a 2'-deoxyribonucleoside 5'-triphosphate + ADP. It carries out the reaction a ribonucleoside 5'-diphosphate + ATP = a ribonucleoside 5'-triphosphate + ADP. Functionally, major role in the synthesis of nucleoside triphosphates other than ATP. The ATP gamma phosphate is transferred to the NDP beta phosphate via a ping-pong mechanism, using a phosphorylated active-site intermediate. This is Nucleoside diphosphate kinase from Yersinia pestis bv. Antiqua (strain Antiqua).